The primary structure comprises 351 residues: MNVAIVGATGYGGIQAVNLLKKIKKYKISFLGGNKTSGSKWNENFPFIYLDNDPYIEEISVDNISKNADVALLCLPNGLSSTLTRKLLDRGLKVIDLSADYRYKSLDEWKNVYSKEAAIYKRNDDDLCKEAVYGLPEINKEAISKGRLIACPGCYPTSALIPLVPYLSQGIIENEGIVIDSKSGTSGGGREPNQKLLLSECGEGLSAYGLINHRHTSEIEQVASLISGNKIELLFTPHLVPISRGMHSTIYGRLRDPGLTSDDCRILLDNYYRNFKNIKVLPVDTFPSTKWVKNTNQIFLSVKVDIRNGRIIILSAIDNLLKGQTGQAIQNLNLMSGFSMDEGLDLTNNFP.

Cys154 is a catalytic residue.

The protein belongs to the NAGSA dehydrogenase family. Type 1 subfamily.

The protein resides in the cytoplasm. It carries out the reaction N-acetyl-L-glutamate 5-semialdehyde + phosphate + NADP(+) = N-acetyl-L-glutamyl 5-phosphate + NADPH + H(+). It participates in amino-acid biosynthesis; L-arginine biosynthesis; N(2)-acetyl-L-ornithine from L-glutamate: step 3/4. Its function is as follows. Catalyzes the NADPH-dependent reduction of N-acetyl-5-glutamyl phosphate to yield N-acetyl-L-glutamate 5-semialdehyde. This is N-acetyl-gamma-glutamyl-phosphate reductase from Prochlorococcus marinus (strain AS9601).